Reading from the N-terminus, the 158-residue chain is 6,7-dimethyl-8-ribityllumazine synthase (158 aa).

5-amino-6-(D-ribitylamino)uracil contacts are provided by residues Phe22, 57-59 (AYE), and 84-86 (TVI). (2S)-2-hydroxy-3-oxobutyl phosphate is bound at residue 89–90 (GT). Catalysis depends on His92, which acts as the Proton donor. 5-amino-6-(D-ribitylamino)uracil is bound at residue Phe117. Arg131 contributes to the (2S)-2-hydroxy-3-oxobutyl phosphate binding site.

This sequence belongs to the DMRL synthase family. As to quaternary structure, forms an icosahedral capsid composed of 60 subunits, arranged as a dodecamer of pentamers.

It carries out the reaction (2S)-2-hydroxy-3-oxobutyl phosphate + 5-amino-6-(D-ribitylamino)uracil = 6,7-dimethyl-8-(1-D-ribityl)lumazine + phosphate + 2 H2O + H(+). It functions in the pathway cofactor biosynthesis; riboflavin biosynthesis; riboflavin from 2-hydroxy-3-oxobutyl phosphate and 5-amino-6-(D-ribitylamino)uracil: step 1/2. Its function is as follows. Catalyzes the formation of 6,7-dimethyl-8-ribityllumazine by condensation of 5-amino-6-(D-ribitylamino)uracil with 3,4-dihydroxy-2-butanone 4-phosphate. This is the penultimate step in the biosynthesis of riboflavin. The protein is 6,7-dimethyl-8-ribityllumazine synthase of Pectobacterium carotovorum subsp. carotovorum (strain PC1).